Here is a 201-residue protein sequence, read N- to C-terminus: Small ribosomal subunit protein uS4c (201 aa).

The disordered stretch occupies residues 20-43; sequence GLTSKRPRAGSDLRNQSRSGKRSQ. The 61-residue stretch at 89-149 folds into the S4 RNA-binding domain; that stretch reads MRLDNILFRL…DEQKSRALIQ (61 aa).

It belongs to the universal ribosomal protein uS4 family. As to quaternary structure, part of the 30S ribosomal subunit. Contacts protein S5. The interaction surface between S4 and S5 is involved in control of translational fidelity.

It localises to the plastid. The protein resides in the chloroplast. Functionally, one of the primary rRNA binding proteins, it binds directly to 16S rRNA where it nucleates assembly of the body of the 30S subunit. In terms of biological role, with S5 and S12 plays an important role in translational accuracy. The chain is Small ribosomal subunit protein uS4c (rps4) from Buxus microphylla (Littleleaf boxwood).